Here is a 142-residue protein sequence, read N- to C-terminus: Small ribosomal subunit protein uS12z (142 aa).

Residue P61 is modified to Hydroxyproline.

The protein belongs to the universal ribosomal protein uS12 family.

The polypeptide is Small ribosomal subunit protein uS12z (RPS23A) (Arabidopsis thaliana (Mouse-ear cress)).